A 339-amino-acid chain; its full sequence is DNA double-strand break repair nuclease NurA (339 aa).

2 residues coordinate Mn(2+): aspartate 58 and aspartate 133.

This sequence belongs to the NurA family. As to quaternary structure, homodimer. Forms a complex with HerA. The cofactor is Mn(2+).

Its activity is regulated as follows. Nuclease activity requires the presence of HerA. Another report shows endo- and exonuclease activity in the absence of HerA; HerA stimulates the exo- but not endonuclease. LhrC-Core (Hel112) inhibits the exonuclease activity of the HerA-NurA complex on ss- and dsDNA, has no effect on the nicking activity of NurA. Endo- and exonuclease activities are inhibited by ATP; ATP may subtract divalent ions from the reaction preventing nuclease activity, HerA can alleviate ATP inhibition. Involved in DNA double-strand break (DSB) repair. Probably acts with HerA to stimulate resection of the 5' strand and produce the long 3' single-strand that is required for RadA loading. NurA and HerA together stimulate the end-resection of six nucleotides of a linear DNA substrate. Processes linear double-stranded (ds)DNA probes with 3' or 5' single-stranded overhangs or blunt ends. Has endonuclease activity on single-stranded (ss)DNA and nicking activity on dsDNA without HerA as well as 5'- and 3'-exonuclease activity on ssDNA. Binds ssDNA, dsDNA, forked and bubble DNA equally well. The polypeptide is DNA double-strand break repair nuclease NurA (Saccharolobus solfataricus (strain ATCC 35092 / DSM 1617 / JCM 11322 / P2) (Sulfolobus solfataricus)).